A 355-amino-acid polypeptide reads, in one-letter code: S-adenosylmethionine:tRNA ribosyltransferase-isomerase (355 aa).

The protein belongs to the QueA family. Monomer.

It is found in the cytoplasm. It carries out the reaction 7-aminomethyl-7-carbaguanosine(34) in tRNA + S-adenosyl-L-methionine = epoxyqueuosine(34) in tRNA + adenine + L-methionine + 2 H(+). The protein operates within tRNA modification; tRNA-queuosine biosynthesis. Transfers and isomerizes the ribose moiety from AdoMet to the 7-aminomethyl group of 7-deazaguanine (preQ1-tRNA) to give epoxyqueuosine (oQ-tRNA). The protein is S-adenosylmethionine:tRNA ribosyltransferase-isomerase of Burkholderia orbicola (strain AU 1054).